A 434-amino-acid polypeptide reads, in one-letter code: Alpha-enolase (434 aa).

Position 40 (Ser-40) interacts with Mg(2+). Substrate-binding residues include His-158 and Glu-167. Glu-210 (proton donor) is an active-site residue. 3 residues coordinate Mg(2+): Asp-245, Glu-293, and Asp-318. 2 residues coordinate substrate: Glu-293 and Asp-318. Lys-343 (proton acceptor) is an active-site residue. Residues 370–373 (SHRS) and Lys-394 contribute to the substrate site.

This sequence belongs to the enolase family. Homodimer. The cofactor is Mg(2+).

The protein resides in the cytoplasm. It catalyses the reaction (2R)-2-phosphoglycerate = phosphoenolpyruvate + H2O. It participates in carbohydrate degradation; glycolysis; pyruvate from D-glyceraldehyde 3-phosphate: step 4/5. This is Alpha-enolase from Python regius (Ball python).